Reading from the N-terminus, the 398-residue chain is Riboflavin biosynthesis protein RibBA (398 aa).

Positions 1-199 are DHBP synthase; it reads MFHPIEEALD…IKDLIQYRYN (199 aa). Residues 26–27, Asp-31, 138–142, and Glu-162 contribute to the D-ribulose 5-phosphate site; these read RE and RAGHT. Glu-27 lines the Mg(2+) pocket. Position 141 (His-141) interacts with Mg(2+). Positions 200-398 are GTP cyclohydrolase II; it reads LTTLVEREVD…MNKLGHLLHF (199 aa). 251–255 is a GTP binding site; it reads RVHSE. The Zn(2+) site is built by Cys-256, Cys-267, and Cys-269. Residues Gln-272, 294 to 296, and Thr-316 each bind GTP; that span reads EGR. Catalysis depends on Asp-328, which acts as the Proton acceptor; for GTP cyclohydrolase activity. Arg-330 functions as the Nucleophile; for GTP cyclohydrolase activity in the catalytic mechanism. 2 residues coordinate GTP: Thr-351 and Lys-356.

The protein in the N-terminal section; belongs to the DHBP synthase family. This sequence in the C-terminal section; belongs to the GTP cyclohydrolase II family. Mg(2+) is required as a cofactor. It depends on Mn(2+) as a cofactor. Zn(2+) serves as cofactor.

The catalysed reaction is D-ribulose 5-phosphate = (2S)-2-hydroxy-3-oxobutyl phosphate + formate + H(+). It carries out the reaction GTP + 4 H2O = 2,5-diamino-6-hydroxy-4-(5-phosphoribosylamino)-pyrimidine + formate + 2 phosphate + 3 H(+). It functions in the pathway cofactor biosynthesis; riboflavin biosynthesis; 2-hydroxy-3-oxobutyl phosphate from D-ribulose 5-phosphate: step 1/1. Its pathway is cofactor biosynthesis; riboflavin biosynthesis; 5-amino-6-(D-ribitylamino)uracil from GTP: step 1/4. Functionally, catalyzes the conversion of D-ribulose 5-phosphate to formate and 3,4-dihydroxy-2-butanone 4-phosphate. Catalyzes the conversion of GTP to 2,5-diamino-6-ribosylamino-4(3H)-pyrimidinone 5'-phosphate (DARP), formate and pyrophosphate. The polypeptide is Riboflavin biosynthesis protein RibBA (Bacillus subtilis (strain 168)).